The following is a 480-amino-acid chain: Probable glycosyltransferase 2 (480 aa).

Gly residues predominate over residues 1–21 (MGQEGMGYNNGKGGGGGGGGL). Positions 1 to 45 (MGQEGMGYNNGKGGGGGGGGLPMTAPRPRGASPLSSHGHHHRSRK) are disordered. Over 1–49 (MGQEGMGYNNGKGGGGGGGGLPMTAPRPRGASPLSSHGHHHRSRKIHRT) the chain is Cytoplasmic. A helical; Signal-anchor for type II membrane protein membrane pass occupies residues 50-72 (FNNVKITVLCGLVTILVLRGTIG). At 73-480 (LNLSLPNQPT…DVKAKISTTS (408 aa)) the chain is on the lumenal side. N-linked (GlcNAc...) asparagine glycosylation is found at Asn-74, Asn-124, Asn-129, and Asn-458.

Belongs to the glycosyltransferase 34 family.

It is found in the golgi apparatus membrane. Functionally, probable glycosyltransferase that may be involved in the biosynthesis of xyloglucan. The protein is Probable glycosyltransferase 2 of Oryza sativa subsp. indica (Rice).